The following is a 964-amino-acid chain: Siderophore exporter MmpL5 (964 aa).

The next 12 helical transmembrane spans lie at 31 to 51 (FAVP…VTVP), 203 to 223 (SLQV…LLVY), 230 to 250 (AIML…VAFL), 255 to 275 (IIGL…AAAT), 302 to 322 (MFGG…GATF), 340 to 360 (AIGM…IIAV), 389 to 409 (WPGP…LTLP), 773 to 793 (TYDL…IMLI), 803 to 823 (VIVG…VLIW), 826 to 846 (ILGI…LLAV), 880 to 900 (VVTA…VSEL), and 923 to 943 (SFMT…PQVV).

The protein belongs to the resistance-nodulation-cell division (RND) (TC 2.A.6) family. MmpL subfamily. Interacts with MmpS5.

It localises to the cell inner membrane. Part of an export system, which is required for biosynthesis and secretion of siderophores. The sequence is that of Siderophore exporter MmpL5 (mmpL5) from Mycobacterium tuberculosis (strain CDC 1551 / Oshkosh).